The chain runs to 2774 residues: Teneurin-2 (2774 aa).

Positions 1-375 (MDVKDRRHRS…KPSKYCSWKC (375 aa)) constitute a Teneurin N-terminal domain. Over 1–379 (MDVKDRRHRS…YCSWKCAALS (379 aa)) the chain is Cytoplasmic. Residues Ser-90 and Ser-124 each carry the phosphoserine modification. Residues 111-271 (TGSDADSDTE…HHHSSANSLN (161 aa)) form a disordered region. Residues 141–155 (SSGLSSRENSALTLT) are compositionally biased toward polar residues. The residue at position 155 (Thr-155) is a Phosphothreonine. Ser-157 is subject to Phosphoserine. A compositionally biased stretch (basic and acidic residues) spans 159–168 (NENKSDDENG). Residues 176 to 188 (SPSLLPSAQLPSS) show a composition bias toward low complexity. Over residues 202–211 (DSNTSHQIMD) the composition is skewed to polar residues. Positions 229–240 (SGPQQASSSGPP) are enriched in low complexity. The helical transmembrane segment at 380-400 (AIAAALLLAILLAYFIAMHLL) threads the bilayer. Over 401–2774 (GLNWQLQPAD…FLRQNEMGKR (2374 aa)) the chain is Extracellular. N-linked (GlcNAc...) asparagine glycosylation is found at Asn-443 and Asn-482. EGF-like domains lie at 575–603 (DCPR…ADCA), 598–634 (LGAD…AECD), 636–668 (PMNQ…EHCE), 669–701 (EVDC…NCEL), 702–735 (ARVQ…PDCS), 738–766 (VCSV…AACD), 769–797 (VCHP…EHCT), and 808–841 (DGCP…PGCN). Cystine bridges form between Cys-576/Cys-586, Cys-580/Cys-591, Cys-593/Cys-602, Cys-611/Cys-622, Cys-624/Cys-633, Cys-640/Cys-651, Cys-645/Cys-656, Cys-658/Cys-667, Cys-672/Cys-683, Cys-677/Cys-688, Cys-690/Cys-699, Cys-710/Cys-723, Cys-725/Cys-734, Cys-739/Cys-749, Cys-743/Cys-754, Cys-756/Cys-765, Cys-770/Cys-780, Cys-774/Cys-785, Cys-787/Cys-796, Cys-810/Cys-820, Cys-814/Cys-829, and Cys-831/Cys-840. Asn-925, Asn-948, and Asn-1267 each carry an N-linked (GlcNAc...) asparagine glycan. 5 NHL repeats span residues 1272–1316 (LELR…VKSL), 1342–1386 (ARCG…NGII), 1401–1452 (LSCD…IAGR), 1474–1501 (LESA…INRL), and 1530–1573 (CYSG…VSKN). A YD 1 repeat occupies 1583 to 1602 (YEAASPGEQELYVFNADGIH). The N-linked (GlcNAc...) asparagine glycan is linked to Asn-1616. 3 YD repeats span residues 1619 to 1639 (YSTD…LKIR), 1682 to 1701 (YDGN…WTTF), and 1702 to 1724 (YDYD…TSLH). Asn-1712, Asn-1749, Asn-1773, Asn-1807, and Asn-1892 each carry an N-linked (GlcNAc...) asparagine glycan. YD repeat units lie at residues 1895–1914 (YFFN…ERTD), 1936–1954 (YLDK…YIFE), 1955–1975 (YDSS…HSMS), 1982–1999 (YIRN…VIFD), 2000–2021 (YSDD…VFYK), 2022–2039 (YGKL…TAVT), 2042–2062 (YDET…FSCT), 2065–2085 (YRKI…EGMV), 2093–2113 (YHDN…TPLP), 2119–2136 (YDEI…GVIY), 2137–2163 (YDIN…IKEV), 2165–2178 (YEMF…MTVQ), 2179–2202 (YDSM…TKYT), 2205–2225 (YDGD…WRYS), 2226–2246 (YDLN…LMPL), 2248–2268 (YDLR…DDDG), 2280–2300 (YNSK…SVQY), and 2302–2322 (YDGV…LQYF). N-linked (GlcNAc...) asparagine glycosylation is present at Asn-1993. An N-linked (GlcNAc...) asparagine glycan is attached at Asn-2197. Asn-2337 carries an N-linked (GlcNAc...) asparagine glycan. The stretch at 2348–2389 (YDLQGHLFAMESSSGEEYYVASDNTGTPLAVFSINGLMIKQL) is one YD 23 repeat. An N-linked (GlcNAc...) asparagine glycan is attached at Asn-2648.

Belongs to the tenascin family. Teneurin subfamily. Homodimer; disulfide-linked. Heterodimer with either TENM1 or TENM3. May also form heterodimer with TENM4. Isoform 2 (C-terminal globular domain) interacts with ADGRL1 isoform 2. Post-translationally, derives from the membrane form by proteolytic processing. In terms of processing, derives from the plasma membrane form by proteolytic cleavage and translocates to the nucleus. Homophilic binding of the C-terminal extracellular domain stimulates its proteolytic cleavage and release in the cytoplasmic. Is subjected to rapid degradation by the proteasome pathway. Highly expressed in heart, followed by brain, liver, kidney and fetal brain and weakly expressed in lung and testis. No expression was detected in skeletal muscle, pancreas, spleen, ovary and fetal liver.

It is found in the cell membrane. The protein resides in the presynaptic cell membrane. The protein localises to the postsynaptic cell membrane. It localises to the endoplasmic reticulum. Its subcellular location is the golgi apparatus. It is found in the synapse. The protein resides in the cell projection. The protein localises to the dendritic spine. It localises to the filopodium. Its subcellular location is the growth cone. It is found in the nucleus. The protein resides in the PML body. In terms of biological role, involved in neural development, regulating the establishment of proper connectivity within the nervous system. Acts as a ligand of the ADGRL1 and ADGRL3 receptors that are expressed at the surface of adjacent cells. Promotes the formation of filopodia and enlarged growth cone in neuronal cells. Mediates axon guidance and homophilic and heterophilic cell-cell adhesion. May function as a cellular signal transducer. Acts as a ligand of the ADGRL1 receptor. Mediates axon guidance and heterophilic cell-cell adhesion. Functionally, induces gene transcription inhibition. This Homo sapiens (Human) protein is Teneurin-2 (TENM2).